Here is a 136-residue protein sequence, read N- to C-terminus: MANLTKLKIVTPYAQNLEKDVYSVELKTSEGRIAVLPDHNPLMSIIENHVAYIRELPNAPRKPLLLLDGIVYVEEHQVRVFSDYFKFLDEIKIDEINSLLNKLKNDLANEEDDKKKLQLKSKIKLNESILIAYKDR.

This sequence belongs to the ATPase epsilon chain family. As to quaternary structure, F-type ATPases have 2 components, CF(1) - the catalytic core - and CF(0) - the membrane proton channel. CF(1) has five subunits: alpha(3), beta(3), gamma(1), delta(1), epsilon(1). CF(0) has three main subunits: a, b and c.

It localises to the cell membrane. In terms of biological role, produces ATP from ADP in the presence of a proton gradient across the membrane. This chain is ATP synthase epsilon chain, found in Ureaplasma urealyticum serovar 10 (strain ATCC 33699 / Western).